Consider the following 271-residue polypeptide: OX-2 membrane glycoprotein homolog (271 aa).

Positions 1–24 (MSSLFISLPWVAFIWLALLGAVGG) are cleaved as a signal peptide. Residues 25–227 (ARVQGPMRGS…QGPLAHDLPA (203 aa)) are Extracellular-facing. The 104-residue stretch at 26–129 (RVQGPMRGSA…SCTACLEVTS (104 aa)) folds into the Ig-like V-type domain. A disulfide bridge connects residues cysteine 39 and cysteine 109. Asparagine 83, asparagine 91, asparagine 138, asparagine 157, asparagine 166, and asparagine 208 each carry an N-linked (GlcNAc...) asparagine; by host glycan. One can recognise an Ig-like C2-type domain in the interval 130-220 (PPTGHVQVNS…ISIPASIQGP (91 aa)). Cysteine 148 and cysteine 202 form a disulfide bridge. A helical transmembrane segment spans residues 228–248 (AQGTLAGVAITLVGLFGIFAL). The Cytoplasmic portion of the chain corresponds to 249–271 (HHCRRKQGGASPTSDDMDPLSTQ).

In terms of assembly, interacts with human CD200R1. Post-translationally, N-glycosylated.

The protein localises to the host cell membrane. Its function is as follows. Dramatically stimulates primary monocytes, macrophages, and dendritic cells to produce the inflammatory cytokines interleukin 1-beta, IL-6, monocyte chemoattractant protein 1, and TNF-alpha. The induction of inflammatory cytokine production potentially promotes the cytokine-mediated angiogenic proliferation of KSHV-infected cells. The sequence is that of OX-2 membrane glycoprotein homolog (K14) from Human herpesvirus 8 type P (isolate GK18) (HHV-8).